A 265-amino-acid polypeptide reads, in one-letter code: H-2 class II histocompatibility antigen, A-D beta chain (265 aa).

Residues 1–27 (MALQIPSLLLSAAVVVLMVLSSPRTEG) form the signal peptide. Residues 28–122 (GNSERHFVVQ…PETSTSLRRL (95 aa)) are beta-1. Residues 28-226 (GNSERHFVVQ…RAQSESARSK (199 aa)) lie on the Extracellular side of the membrane. 2 cysteine pairs are disulfide-bonded: C42–C106 and C145–C201. N46 carries N-linked (GlcNAc...) asparagine glycosylation. A beta-2 region spans residues 123 to 216 (EQPNVAISLS…SLKSPITVEW (94 aa)). Positions 125–213 (PNVAISLSRT…EHPSLKSPIT (89 aa)) constitute an Ig-like C1-type domain. Residues 217 to 226 (RAQSESARSK) are connecting peptide. Residues 227–247 (MLSGIGGCVLGVIFLGLGLFI) traverse the membrane as a helical segment. At 248–265 (RHRSQKGPRGPPPAGLLQ) the chain is on the cytoplasmic side.

It belongs to the MHC class II family. In terms of processing, ubiquitinated in immature dendritic cells leading to down-regulation of MHC class II.

It is found in the membrane. This chain is H-2 class II histocompatibility antigen, A-D beta chain (H2-Ab1), found in Mus musculus (Mouse).